Consider the following 283-residue polypeptide: Nopaline-binding periplasmic protein (283 aa).

The N-terminal stretch at 1–25 (MKFFNLNALAAVVTGVLLAAGPTQA) is a signal peptide. Cysteine 63 and cysteine 70 are oxidised to a cystine.

It belongs to the bacterial solute-binding protein 3 family.

It localises to the periplasm. Its function is as follows. Component of the nopaline active transport system probably consisting of four subunits: Q, M, P and T. This system is also capable of transporting octopine provided that catabolic functions are induced with nopaline. The sequence is that of Nopaline-binding periplasmic protein (nocT) from Agrobacterium fabrum (strain C58 / ATCC 33970) (Agrobacterium tumefaciens (strain C58)).